A 254-amino-acid chain; its full sequence is Zinc import ATP-binding protein ZnuC (254 aa).

The ABC transporter domain occupies 5-221; the sequence is ICAADLSVSH…PAYRALFGSE (217 aa). 38-45 contributes to the ATP binding site; it reads GPNGSGKS. Positions 234–245 are enriched in basic and acidic residues; sequence DHDHDHVAEGHR. Residues 234–254 form a disordered region; it reads DHDHDHVAEGHRHGPACAHPH.

This sequence belongs to the ABC transporter superfamily. Zinc importer (TC 3.A.1.15.5) family. In terms of assembly, the complex is composed of two ATP-binding proteins (ZnuC), two transmembrane proteins (ZnuB) and a solute-binding protein (ZnuA).

The protein localises to the cell inner membrane. The catalysed reaction is Zn(2+)(out) + ATP(in) + H2O(in) = Zn(2+)(in) + ADP(in) + phosphate(in) + H(+)(in). Its function is as follows. Part of the ABC transporter complex ZnuABC involved in zinc import. Responsible for energy coupling to the transport system. The polypeptide is Zinc import ATP-binding protein ZnuC (Paracoccus denitrificans (strain Pd 1222)).